We begin with the raw amino-acid sequence, 269 residues long: Undecaprenyl-diphosphatase (269 aa).

8 helical membrane-spanning segments follow: residues 1–21, 40–59, 87–107, 117–137, 147–166, 188–208, 220–240, and 248–268; these read MDIM…ILPI, GLTF…CVYF, FFII…EKPI, LIAL…TTGP, LRGA…PGVS, FSFL…MGEL, PLLA…ALLL, and LYPF…YLFA.

Belongs to the UppP family.

The protein localises to the cell inner membrane. The enzyme catalyses di-trans,octa-cis-undecaprenyl diphosphate + H2O = di-trans,octa-cis-undecaprenyl phosphate + phosphate + H(+). In terms of biological role, catalyzes the dephosphorylation of undecaprenyl diphosphate (UPP). Confers resistance to bacitracin. In Geobacter sulfurreducens (strain ATCC 51573 / DSM 12127 / PCA), this protein is Undecaprenyl-diphosphatase.